The following is a 305-amino-acid chain: tRNA pseudouridine synthase B (305 aa).

Catalysis depends on aspartate 48, which acts as the Nucleophile.

The protein belongs to the pseudouridine synthase TruB family. Type 1 subfamily.

It catalyses the reaction uridine(55) in tRNA = pseudouridine(55) in tRNA. Functionally, responsible for synthesis of pseudouridine from uracil-55 in the psi GC loop of transfer RNAs. This is tRNA pseudouridine synthase B from Pseudomonas fluorescens (strain Pf0-1).